A 763-amino-acid chain; its full sequence is MNSRPSNPTKLVIRSSTLLFCGVVLIHLFAAQIDAQRSTSRWQTLNGDAPLVIARGGFSGLYPDSSIAAYQLATLTSVADVVLWCDLQLTKDGLGICFPDLNLANASTIDRVYPNREKSYSVNGVTTKGWFPNDFSLTELQNFLLIRGILSRTDRFDGNGYLISTIEDVVTTLNREGFWLNVQHDAFYEQQNLSMSSFLLSVSRTVSIDFISSPEVNFFKKITGSFGRNGPTFVFQFLGKEDFEPTTNRTYGSILSNLTFVKTFASGILVPKSYILPLDDEQYLVPHTSLVQDAHKAGLQVYVSGFANDVDIAYNYSSDPVSEYLSFVDNGDFSVDGVLSDFPITASAAVDCFSHIGRNATKQVDFLVISKDGASGDYPGCTDLAYEKAIKDGADVIDCSVQMSSDGVPFCLRSIDLRNSIAALQNTFSNRSTSVPEISSVPGIFTFSLTWPEIQSLTPAISNPFRVYRIFRNPREKNSGKLISLSQFLDLAKTYTSLSGVLISVENAAYLREKQGLDVVQAVLDTLTEAGYSNGTTTTKVMIQSTNSSVLVDFKKQSKYETVYKIEETIGNIRDSAIEDIKKFANAVVINKDSVFPNSDSFLTGQTNVVERLQKSQLPVYVELFRNEFVSQAYDFFSDATVEINAYIYGAGINGTITEFPFTAARYKRNRCLGREEVPPYMLPVNPGGLLNVMSPLSLPPAQAPNQDFIEADVTEPPLSPVIAKAPTSTPGTPSTIAQAPSGQTRLKLSLLLSVFFLSLLLL.

The first 35 residues, 1-35 (MNSRPSNPTKLVIRSSTLLFCGVVLIHLFAAQIDA), serve as a signal peptide directing secretion. Residues 36–744 (QRSTSRWQTL…STIAQAPSGQ (709 aa)) are Extracellular-facing. The GP-PDE 1 domain occupies 50 to 350 (PLVIARGGFS…DFPITASAAV (301 aa)). N-linked (GlcNAc...) asparagine glycans are attached at residues Asn-105, Asn-192, Asn-248, Asn-257, Asn-315, Asn-359, Asn-430, Asn-534, Asn-547, and Asn-654. Residues 366–668 (FLVISKDGAS…EFPFTAARYK (303 aa)) form the GP-PDE 2 domain. Residues 745 to 762 (TRLKLSLLLSVFFLSLLL) form a helical membrane-spanning segment. A topological domain (cytoplasmic) is located at residue Leu-763.

It belongs to the glycerophosphoryl diester phosphodiesterase family. Ca(2+) serves as cofactor. Expressed in rosette and cauline leaves, stems, flowers and siliques.

It is found in the cell membrane. It carries out the reaction a sn-glycero-3-phosphodiester + H2O = an alcohol + sn-glycerol 3-phosphate + H(+). Hydrolyzes glycerolphosphoglycerol, glycerophosphocholine and glycerophosphoethanolamine in vitro. The chain is Glycerophosphodiester phosphodiesterase GDPDL1 from Arabidopsis thaliana (Mouse-ear cress).